Reading from the N-terminus, the 164-residue chain is Nucleotide-binding protein Helmi_22490 (164 aa).

It belongs to the YajQ family.

Functionally, nucleotide-binding protein. The polypeptide is Nucleotide-binding protein Helmi_22490 (Heliobacterium modesticaldum (strain ATCC 51547 / Ice1)).